We begin with the raw amino-acid sequence, 242 residues long: Large ribosomal subunit protein uL30x (242 aa).

This sequence belongs to the universal ribosomal protein uL30 family.

The chain is Large ribosomal subunit protein uL30x (RPL7C) from Arabidopsis thaliana (Mouse-ear cress).